The primary structure comprises 54 residues: uncharacterized protein (54 aa).

This is an uncharacterized protein from Escherichia coli (strain K12).